Consider the following 416-residue polypeptide: Serine/threonine-protein kinase 26 (416 aa).

Ala2 is subject to N-acetylalanine. Ser4 carries the phosphoserine modification. In terms of domain architecture, Protein kinase spans 24–274 (FTKLERIGKG…AKELLKHKFI (251 aa)). Residues 30–38 (IGKGSFGEV) and Lys53 contribute to the ATP site. Asp144 serves as the catalytic Proton acceptor. Thr178 is modified (phosphothreonine; by autocatalysis). The segment at 297–340 (EGHSDDESDSEGSDSESTSRENNTHPEWSFTTVRKKPDPKKVQN) is disordered. Phosphoserine occurs at positions 300, 304, 306, 309, and 325. Residues Thr327 and Thr328 each carry the phosphothreonine modification.

Belongs to the protein kinase superfamily. STE Ser/Thr protein kinase family. STE20 subfamily. As to quaternary structure, homodimer. Interacts with PDCD10. Interacts with GOLGA2. Interacts with CTTNBP2NL. Interacts with RIPOR1 (via C-terminus); this interaction occurs in a PDCD10-dependent and Rho-independent manner. Interacts with PDCD10; this interaction is required for the association of STK26 with RIPOR1. Part of the core of STRIPAK complexes composed of PP2A catalytic and scaffolding subunits, the striatins (PP2A regulatory subunits), the striatin-associated proteins MOB4, STRIP1 and STRIP2, PDCD10 and members of the STE20 kinases, such as STK24 and STK26. Mg(2+) is required as a cofactor.

The protein localises to the cytoplasm. Its subcellular location is the golgi apparatus. It carries out the reaction L-seryl-[protein] + ATP = O-phospho-L-seryl-[protein] + ADP + H(+). The catalysed reaction is L-threonyl-[protein] + ATP = O-phospho-L-threonyl-[protein] + ADP + H(+). Its activity is regulated as follows. Interaction with Golgi matrix protein GOLGA2 leads to autophosphorylation on Thr-178, possibly as a consequence of stabilization of dimer formation. May also be activated by C-terminal cleavage. Its function is as follows. Serine/threonine-protein kinase that acts as a mediator of cell growth. Modulates apoptosis. In association with STK24 negatively regulates Golgi reorientation in polarized cell migration upon RHO activation. Phosphorylates ATG4B at 'Ser-383', thereby increasing autophagic flux. Part of the striatin-interacting phosphatase and kinase (STRIPAK) complexes. STRIPAK complexes have critical roles in protein (de)phosphorylation and are regulators of multiple signaling pathways including Hippo, MAPK, nuclear receptor and cytoskeleton remodeling. Different types of STRIPAK complexes are involved in a variety of biological processes such as cell growth, differentiation, apoptosis, metabolism and immune regulation. This chain is Serine/threonine-protein kinase 26, found in Homo sapiens (Human).